Consider the following 344-residue polypeptide: BURP domain-containing protein 16 (344 aa).

Positions 1 to 25 are cleaved as a signal peptide; that stretch reads MATSFLFSLILLLITALSLPFPLHA. N-linked (GlcNAc...) asparagine glycans are attached at residues Asn-90, Asn-120, Asn-181, and Asn-333. The BURP domain maps to 128-341; it reads FFREQELKEG…FNGSMTWVIA (214 aa).

Expressed in roots, stems, leaves and panicles.

The sequence is that of BURP domain-containing protein 16 (BURP16) from Oryza sativa subsp. japonica (Rice).